Reading from the N-terminus, the 410-residue chain is Chlorobenzene dioxygenase, ferredoxin reductase component (410 aa).

H4–N35 is an FAD binding site. R145 to E173 lines the NAD(+) pocket.

This sequence belongs to the bacterial ring-hydroxylating dioxygenase ferredoxin reductase family. As to quaternary structure, this dioxygenase system consists of four proteins: the two subunits of the oxygenase component (TecA1 and TecA2), a ferredoxin (TecA3) and a ferredoxin reductase (TecA4). FAD is required as a cofactor.

The enzyme catalyses 2 reduced [2Fe-2S]-[ferredoxin] + NAD(+) + H(+) = 2 oxidized [2Fe-2S]-[ferredoxin] + NADH. It participates in aromatic compound metabolism. In terms of biological role, part of the chlorobenzene dioxygenase system that catalyzes the dihydroxylation of a range of aromatic compounds, including chlorinated benzenes and toluenes, and dinuclear aromatics such as biphenyl and dibenzo-p-dioxin. The chain is Chlorobenzene dioxygenase, ferredoxin reductase component from Cupriavidus sp. (strain PS12).